The following is a 43-amino-acid chain: Neurotrophic factor BDNF (43 aa).

The protein belongs to the NGF-beta family.

Its subcellular location is the secreted. In terms of biological role, promotes the survival of neuronal populations that are all located either in the central nervous system or directly connected to it. The chain is Neurotrophic factor BDNF (BDNF) from Macrovipera lebetinus (Levantine viper).